The following is a 229-amino-acid chain: Cytochrome c oxidase subunit 2 (229 aa).

The Mitochondrial intermembrane portion of the chain corresponds to 1–14 (MPTPNQTNFQDAAS). The helical transmembrane segment at 15–45 (PLMEELTHFHDHTLMIVFMISLLVLYILLSM) threads the bilayer. The Mitochondrial matrix segment spans residues 46-59 (LSTKLTHTNTANAQ). The helical transmembrane segment at 60–87 (QAEMVWTILPAIILITIALPSLQILYMM) threads the bilayer. Residues 88–229 (DEINKPHMTI…DLWLAMIDTL (142 aa)) are Mitochondrial intermembrane-facing. The Cu cation site is built by His-161, Cys-196, Glu-198, Cys-200, His-204, and Met-207. Glu-198 provides a ligand contact to Mg(2+).

It belongs to the cytochrome c oxidase subunit 2 family. As to quaternary structure, component of the cytochrome c oxidase (complex IV, CIV), a multisubunit enzyme composed of 14 subunits. The complex is composed of a catalytic core of 3 subunits MT-CO1, MT-CO2 and MT-CO3, encoded in the mitochondrial DNA, and 11 supernumerary subunits COX4I, COX5A, COX5B, COX6A, COX6B, COX6C, COX7A, COX7B, COX7C, COX8 and NDUFA4, which are encoded in the nuclear genome. The complex exists as a monomer or a dimer and forms supercomplexes (SCs) in the inner mitochondrial membrane with NADH-ubiquinone oxidoreductase (complex I, CI) and ubiquinol-cytochrome c oxidoreductase (cytochrome b-c1 complex, complex III, CIII), resulting in different assemblies (supercomplex SCI(1)III(2)IV(1) and megacomplex MCI(2)III(2)IV(2)). Found in a complex with TMEM177, COA6, COX18, COX20, SCO1 and SCO2. Interacts with TMEM177 in a COX20-dependent manner. Interacts with COX20. Interacts with COX16. It depends on Cu cation as a cofactor.

It localises to the mitochondrion inner membrane. The catalysed reaction is 4 Fe(II)-[cytochrome c] + O2 + 8 H(+)(in) = 4 Fe(III)-[cytochrome c] + 2 H2O + 4 H(+)(out). Component of the cytochrome c oxidase, the last enzyme in the mitochondrial electron transport chain which drives oxidative phosphorylation. The respiratory chain contains 3 multisubunit complexes succinate dehydrogenase (complex II, CII), ubiquinol-cytochrome c oxidoreductase (cytochrome b-c1 complex, complex III, CIII) and cytochrome c oxidase (complex IV, CIV), that cooperate to transfer electrons derived from NADH and succinate to molecular oxygen, creating an electrochemical gradient over the inner membrane that drives transmembrane transport and the ATP synthase. Cytochrome c oxidase is the component of the respiratory chain that catalyzes the reduction of oxygen to water. Electrons originating from reduced cytochrome c in the intermembrane space (IMS) are transferred via the dinuclear copper A center (CU(A)) of subunit 2 and heme A of subunit 1 to the active site in subunit 1, a binuclear center (BNC) formed by heme A3 and copper B (CU(B)). The BNC reduces molecular oxygen to 2 water molecules using 4 electrons from cytochrome c in the IMS and 4 protons from the mitochondrial matrix. This Pelomedusa subrufa (African side-necked turtle) protein is Cytochrome c oxidase subunit 2 (MT-CO2).